A 342-amino-acid chain; its full sequence is Glucokinase (342 aa).

An ATP-binding site is contributed by 7–12 (GDIGGT).

This sequence belongs to the bacterial glucokinase family.

The protein localises to the cytoplasm. The enzyme catalyses D-glucose + ATP = D-glucose 6-phosphate + ADP + H(+). The polypeptide is Glucokinase (Nostoc sp. (strain PCC 7120 / SAG 25.82 / UTEX 2576)).